A 110-amino-acid chain; its full sequence is Large ribosomal subunit protein P2C (110 aa).

Residues 83–110 (APAAEEAAKEEAKEEEESDEDMGFGLFD) are disordered. Residues 95 to 104 (KEEEESDEDM) are compositionally biased toward acidic residues. Ser100 is modified (phosphoserine).

It belongs to the eukaryotic ribosomal protein P1/P2 family. In terms of assembly, component of the large ribosomal subunit (LSU). Mature yeast ribosomes consist of a small (40S) and a large (60S) subunit. The 40S small subunit contains 1 molecule of ribosomal RNA (18S rRNA) and at least 33 different proteins. The large 60S subunit contains 3 rRNA molecules (25S, 5.8S and 5S rRNA) and at least 46 different proteins. The acidic ribosomal P-proteins form the stalk structure of the 60S subunit. They are organized as a pentameric complex in which uL10/P0 interacts with 2 heterodimers of P1 and P2 proteins.

The protein localises to the cytoplasm. In terms of biological role, component of the ribosome, a large ribonucleoprotein complex responsible for the synthesis of proteins in the cell. The small ribosomal subunit (SSU) binds messenger RNAs (mRNAs) and translates the encoded message by selecting cognate aminoacyl-transfer RNA (tRNA) molecules. The large subunit (LSU) contains the ribosomal catalytic site termed the peptidyl transferase center (PTC), which catalyzes the formation of peptide bonds, thereby polymerizing the amino acids delivered by tRNAs into a polypeptide chain. The nascent polypeptides leave the ribosome through a tunnel in the LSU and interact with protein factors that function in enzymatic processing, targeting, and the membrane insertion of nascent chains at the exit of the ribosomal tunnel. This is Large ribosomal subunit protein P2C (rpp203) from Schizosaccharomyces pombe (strain 972 / ATCC 24843) (Fission yeast).